A 190-amino-acid chain; its full sequence is Embryo-specific protein ATS3B (190 aa).

The first 24 residues, 1–24 (MASVRLFFTLISFVFIISTSVYES), serve as a signal peptide directing secretion. Residue N37 is glycosylated (N-linked (GlcNAc...) asparagine). Residues 48–158 (CAYTVIISTS…ESVWYGFNYC (111 aa)) enclose the PLAT domain.

As to quaternary structure, interacts with EULS3 (via N-terminus). In terms of tissue distribution, expressed in roots, rosette leaves, stems, cauline leaves and flowers.

The protein localises to the secreted. May play a role during embryo development. The chain is Embryo-specific protein ATS3B from Arabidopsis thaliana (Mouse-ear cress).